The following is a 147-amino-acid chain: Large ribosomal subunit protein uL15 (147 aa).

The interval 21–49 (RVGRGEGSKGKTAGRGTKGTKARAPVRPG) is disordered.

It belongs to the universal ribosomal protein uL15 family. In terms of assembly, part of the 50S ribosomal subunit.

Functionally, binds to the 23S rRNA. The protein is Large ribosomal subunit protein uL15 of Tropheryma whipplei (strain TW08/27) (Whipple's bacillus).